The following is a 194-amino-acid chain: Ribonuclease HII (194 aa).

Residues 1-194 (MTVGVDEVGR…RLFPRDDGLR (194 aa)) enclose the RNase H type-2 domain. 3 residues coordinate a divalent metal cation: D6, E7, and D102.

It belongs to the RNase HII family. It depends on Mn(2+) as a cofactor. Mg(2+) serves as cofactor.

The protein resides in the cytoplasm. It carries out the reaction Endonucleolytic cleavage to 5'-phosphomonoester.. Its function is as follows. Endonuclease that specifically degrades the RNA of RNA-DNA hybrids. The protein is Ribonuclease HII of Synechococcus sp. (strain WH7803).